We begin with the raw amino-acid sequence, 406 residues long: Interactor protein for cytohesin exchange factors 1 (406 aa).

A PH domain is found at His-13–Thr-112. Disordered stretches follow at residues Thr-118 to Leu-173, Cys-228 to Glu-285, and Pro-383 to Leu-406. Positions Cys-123–Thr-134 are enriched in acidic residues. Residues Ala-144–Ser-160 show a composition bias toward low complexity. Residues Cys-228–Glu-239 show a composition bias toward polar residues. Residues Leu-243 to Asp-259 show a composition bias toward low complexity. Residues Met-272–Glu-285 are compositionally biased toward basic and acidic residues. The necessary for interaction with PSCD2 and to translocate to the plasma membrane stretch occupies residues Glu-285–Leu-406. A compositionally biased stretch (polar residues) spans Glu-392 to Leu-406.

As to quaternary structure, interacts with guanine-nucleotide exchange factors PSCD1, PSCD2, PSCD3 and PSCD4. In terms of tissue distribution, expressed in brain, spleen, lung, testis and kidney.

The protein resides in the cytoplasm. Its subcellular location is the cell membrane. Functionally, enhances the promotion of guanine-nucleotide exchange by PSCD2 on ARF6 in a concentration-dependent manner. The chain is Interactor protein for cytohesin exchange factors 1 (Ipcef1) from Rattus norvegicus (Rat).